Reading from the N-terminus, the 308-residue chain is Ribosomal RNA large subunit methyltransferase F (308 aa).

Belongs to the methyltransferase superfamily. METTL16/RlmF family.

It localises to the cytoplasm. The enzyme catalyses adenosine(1618) in 23S rRNA + S-adenosyl-L-methionine = N(6)-methyladenosine(1618) in 23S rRNA + S-adenosyl-L-homocysteine + H(+). Its function is as follows. Specifically methylates the adenine in position 1618 of 23S rRNA. The polypeptide is Ribosomal RNA large subunit methyltransferase F (Shigella flexneri serotype 5b (strain 8401)).